We begin with the raw amino-acid sequence, 617 residues long: Elongation factor 4 (617 aa).

Residues 17 to 203 (ERIRNFCIIA…RVCELVPHPV (187 aa)) form the tr-type G domain. Residues 29 to 34 (DHGKST) and 150 to 153 (NKID) each bind GTP.

The protein belongs to the TRAFAC class translation factor GTPase superfamily. Classic translation factor GTPase family. LepA subfamily.

The protein resides in the cell membrane. The catalysed reaction is GTP + H2O = GDP + phosphate + H(+). Functionally, required for accurate and efficient protein synthesis under certain stress conditions. May act as a fidelity factor of the translation reaction, by catalyzing a one-codon backward translocation of tRNAs on improperly translocated ribosomes. Back-translocation proceeds from a post-translocation (POST) complex to a pre-translocation (PRE) complex, thus giving elongation factor G a second chance to translocate the tRNAs correctly. Binds to ribosomes in a GTP-dependent manner. The protein is Elongation factor 4 of Corynebacterium urealyticum (strain ATCC 43042 / DSM 7109).